We begin with the raw amino-acid sequence, 380 residues long: uncharacterized protein (380 aa).

This is an uncharacterized protein from Homo sapiens (Human).